Reading from the N-terminus, the 387-residue chain is Patatin group J-1 (387 aa).

A signal peptide spans 1-23; the sequence is MATTKSFLILIVMILATTSSTFA. A PNPLA domain is found at 32–230; the sequence is LSIDGGGIKG…TVGDPALLSL (199 aa). The short motif at 36–41 is the GXGXXG element; it reads GGGIKG. The short motif at 75 to 79 is the GXSXG element; the sequence is GTSTG. Serine 77 functions as the Nucleophile in the catalytic mechanism. Asparagine 115 carries an N-linked (GlcNAc...) asparagine glycan. Aspartate 216 acts as the Proton acceptor in catalysis. The short motif at 216–218 is the DGA/G element; it reads DGG. A coiled-coil region spans residues 322-385; that stretch reads ENALTGTTTE…NRKKLRANKA (64 aa).

Belongs to the patatin family. In terms of tissue distribution, tuber.

It is found in the vacuole. Its function is as follows. Probable lipolytic acyl hydrolase (LAH), an activity which is thought to be involved in the response of tubers to pathogens. This Solanum tuberosum (Potato) protein is Patatin group J-1.